The following is a 652-amino-acid chain: Regulator of DNA class I crossover intermediates 1 (652 aa).

The binds DNA containing a D-loop DNA-binding region spans methionine 1 to glycine 231. Disordered stretches follow at residues asparagine 363 to serine 434 and lysine 469 to isoleucine 506. A compositionally biased stretch (basic and acidic residues) spans tyrosine 377–aspartate 388. Positions leucine 389 to serine 401 are enriched in polar residues. A compositionally biased stretch (basic and acidic residues) spans serine 402–proline 417. The segment covering aspartate 473–leucine 498 has biased composition (low complexity).

Interacts with MSH5. Interacts with TEX11.

The protein resides in the chromosome. In terms of biological role, involved in recombination, probably acting by stabilizing recombination intermediates during meiotic crossover formation. Required for normal germline development and fertility. Required for meiotic progression, complete chromosomal synapsis and crossover formation. Binds double-stranded DNA. However, also binds branched DNA molecules, such as those containing a D-loop or Holliday junction structure. Probably not required for formation of DNA double-strand breaks (DSBs). Also binds RNA in an RNA structure-independent manner, with a preference for binding 3'-UTR regions of mRNAs; may stabilize bound RNAs. The polypeptide is Regulator of DNA class I crossover intermediates 1 (Homo sapiens (Human)).